The following is a 268-amino-acid chain: Tryptophan synthase alpha chain (268 aa).

Catalysis depends on proton acceptor residues Glu47 and Asp58.

This sequence belongs to the TrpA family. As to quaternary structure, tetramer of two alpha and two beta chains.

It is found in the plastid. The protein resides in the chloroplast. The enzyme catalyses (1S,2R)-1-C-(indol-3-yl)glycerol 3-phosphate + L-serine = D-glyceraldehyde 3-phosphate + L-tryptophan + H2O. Its pathway is amino-acid biosynthesis; L-tryptophan biosynthesis; L-tryptophan from chorismate: step 5/5. The alpha subunit is responsible for the aldol cleavage of indoleglycerol phosphate to indole and glyceraldehyde 3-phosphate. The polypeptide is Tryptophan synthase alpha chain (Gracilaria tenuistipitata var. liui (Red alga)).